A 273-amino-acid chain; its full sequence is 4-hydroxy-tetrahydrodipicolinate reductase (273 aa).

Residues 8 to 13 (GACGRM), Glu34, 102 to 104 (GTT), and 128 to 131 (APNM) each bind NAD(+). The Proton donor/acceptor role is filled by His160. His161 is a (S)-2,3,4,5-tetrahydrodipicolinate binding site. Lys164 (proton donor) is an active-site residue. 170–171 (GT) provides a ligand contact to (S)-2,3,4,5-tetrahydrodipicolinate.

Belongs to the DapB family.

Its subcellular location is the cytoplasm. It carries out the reaction (S)-2,3,4,5-tetrahydrodipicolinate + NAD(+) + H2O = (2S,4S)-4-hydroxy-2,3,4,5-tetrahydrodipicolinate + NADH + H(+). It catalyses the reaction (S)-2,3,4,5-tetrahydrodipicolinate + NADP(+) + H2O = (2S,4S)-4-hydroxy-2,3,4,5-tetrahydrodipicolinate + NADPH + H(+). The protein operates within amino-acid biosynthesis; L-lysine biosynthesis via DAP pathway; (S)-tetrahydrodipicolinate from L-aspartate: step 4/4. Its function is as follows. Catalyzes the conversion of 4-hydroxy-tetrahydrodipicolinate (HTPA) to tetrahydrodipicolinate. The chain is 4-hydroxy-tetrahydrodipicolinate reductase from Methanothermobacter thermautotrophicus (strain ATCC 29096 / DSM 1053 / JCM 10044 / NBRC 100330 / Delta H) (Methanobacterium thermoautotrophicum).